Consider the following 176-residue polypeptide: Ribosome maturation factor RimM (176 aa).

One can recognise a PRC barrel domain in the interval 100–173 (PEEYYDYQLI…RLRIDPPPGL (74 aa)).

Belongs to the RimM family. As to quaternary structure, binds ribosomal protein uS19.

It localises to the cytoplasm. In terms of biological role, an accessory protein needed during the final step in the assembly of 30S ribosomal subunit, possibly for assembly of the head region. Essential for efficient processing of 16S rRNA. May be needed both before and after RbfA during the maturation of 16S rRNA. It has affinity for free ribosomal 30S subunits but not for 70S ribosomes. This is Ribosome maturation factor RimM from Acidothermus cellulolyticus (strain ATCC 43068 / DSM 8971 / 11B).